The chain runs to 556 residues: 2-succinyl-5-enolpyruvyl-6-hydroxy-3-cyclohexene-1-carboxylate synthase (556 aa).

It belongs to the TPP enzyme family. MenD subfamily. As to quaternary structure, homodimer. The cofactor is Mg(2+). It depends on Mn(2+) as a cofactor. Requires thiamine diphosphate as cofactor.

The catalysed reaction is isochorismate + 2-oxoglutarate + H(+) = 5-enolpyruvoyl-6-hydroxy-2-succinyl-cyclohex-3-ene-1-carboxylate + CO2. It participates in quinol/quinone metabolism; 1,4-dihydroxy-2-naphthoate biosynthesis; 1,4-dihydroxy-2-naphthoate from chorismate: step 2/7. The protein operates within quinol/quinone metabolism; menaquinone biosynthesis. In terms of biological role, catalyzes the thiamine diphosphate-dependent decarboxylation of 2-oxoglutarate and the subsequent addition of the resulting succinic semialdehyde-thiamine pyrophosphate anion to isochorismate to yield 2-succinyl-5-enolpyruvyl-6-hydroxy-3-cyclohexene-1-carboxylate (SEPHCHC). In Salmonella dublin (strain CT_02021853), this protein is 2-succinyl-5-enolpyruvyl-6-hydroxy-3-cyclohexene-1-carboxylate synthase.